Reading from the N-terminus, the 338-residue chain is Ketol-acid reductoisomerase (NADP(+)) (338 aa).

The KARI N-terminal Rossmann domain occupies 1–181 (MKVFYDKDAD…GGGRAGIIET (181 aa)). Residues 24 to 27 (YGSQ), Arg47, and Ser52 each bind NADP(+). His107 is an active-site residue. Gly133 is an NADP(+) binding site. The 146-residue stretch at 182–327 (NFREETETDL…AKLRSMMPWI (146 aa)) folds into the KARI C-terminal knotted domain. Residues Asp190, Glu194, Glu226, and Glu230 each contribute to the Mg(2+) site. Ser251 contacts substrate.

The protein belongs to the ketol-acid reductoisomerase family. Mg(2+) is required as a cofactor.

It carries out the reaction (2R)-2,3-dihydroxy-3-methylbutanoate + NADP(+) = (2S)-2-acetolactate + NADPH + H(+). It catalyses the reaction (2R,3R)-2,3-dihydroxy-3-methylpentanoate + NADP(+) = (S)-2-ethyl-2-hydroxy-3-oxobutanoate + NADPH + H(+). The protein operates within amino-acid biosynthesis; L-isoleucine biosynthesis; L-isoleucine from 2-oxobutanoate: step 2/4. It functions in the pathway amino-acid biosynthesis; L-valine biosynthesis; L-valine from pyruvate: step 2/4. Its function is as follows. Involved in the biosynthesis of branched-chain amino acids (BCAA). Catalyzes an alkyl-migration followed by a ketol-acid reduction of (S)-2-acetolactate (S2AL) to yield (R)-2,3-dihydroxy-isovalerate. In the isomerase reaction, S2AL is rearranged via a Mg-dependent methyl migration to produce 3-hydroxy-3-methyl-2-ketobutyrate (HMKB). In the reductase reaction, this 2-ketoacid undergoes a metal-dependent reduction by NADPH to yield (R)-2,3-dihydroxy-isovalerate. This Paraburkholderia phytofirmans (strain DSM 17436 / LMG 22146 / PsJN) (Burkholderia phytofirmans) protein is Ketol-acid reductoisomerase (NADP(+)).